Here is a 238-residue protein sequence, read N- to C-terminus: Ribonuclease PH (238 aa).

Phosphate-binding positions include Arg-86 and Gly-124–Arg-126.

The protein belongs to the RNase PH family. Homohexameric ring arranged as a trimer of dimers.

It catalyses the reaction tRNA(n+1) + phosphate = tRNA(n) + a ribonucleoside 5'-diphosphate. Its function is as follows. Phosphorolytic 3'-5' exoribonuclease that plays an important role in tRNA 3'-end maturation. Removes nucleotide residues following the 3'-CCA terminus of tRNAs; can also add nucleotides to the ends of RNA molecules by using nucleoside diphosphates as substrates, but this may not be physiologically important. Probably plays a role in initiation of 16S rRNA degradation (leading to ribosome degradation) during starvation. The sequence is that of Ribonuclease PH from Pectobacterium atrosepticum (strain SCRI 1043 / ATCC BAA-672) (Erwinia carotovora subsp. atroseptica).